Consider the following 383-residue polypeptide: tRNA (guanine-N(7)-)-methyltransferase non-catalytic subunit wuho (383 aa).

5 WD repeats span residues 61-101 (NLEV…ALLL), 105-144 (ALAR…APPK), 148-187 (GHLS…DIHS), 191-231 (GHKE…EVLQ), and 289-329 (AGSW…QAES).

Belongs to the WD repeat TRM82 family. Forms a heterodimer with the catalytic subunit Mettl1. Interacts with mei-P26 and weakly interacts with bgcn; required for the function or formation of the mei-P26-bgcn-bam-sxl complex. Interacts with nanos; may be involved in mei-P26-dependent derepression of the BMP signaling pathway. Interacts with Myc; the interaction may be mediated by mei-P26 and may be involved in the regulation of ribosome biogenesis. As to expression, in testis, it is present at high level in hub cells, a niche for germline stem cells of testis. Ubiquitously expressed in all testicular cells throughout spermatogenesis. Ubiquitously expressed in all germline and somatic cells of the ovary.

The protein resides in the nucleus. The protein localises to the cytoplasm. The protein operates within tRNA modification; N(7)-methylguanine-tRNA biosynthesis. Its function is as follows. Required for the Mettl1-dependent formation of N(7)-methylguanine at position 46 (m7G46) in tRNA. In the Mettl1-wuho methyltransferase complex, it is required to stabilize and induce conformational changes of the catalytic subunit. Required for binding of nanos mRNA and repression of translation by the mei-P26-bgcn-bam-sxl complex. May cooperate with mei-P26 and nanos to derepress the BMP signaling pathway. May cooperate with mei-P26 to suppress expression of a subset of microRNAs. May cooperate with mei-P26 to regulate bam expression levels in germline cells during gametogenesis. Required to promote mitosis to meiosis transition during gametogenesis. May regulate germline cell division in part by regulating ribosome biogenesis. This chain is tRNA (guanine-N(7)-)-methyltransferase non-catalytic subunit wuho, found in Drosophila mojavensis (Fruit fly).